Reading from the N-terminus, the 269-residue chain is Ubiquinone/menaquinone biosynthesis C-methyltransferase UbiE (269 aa).

S-adenosyl-L-methionine-binding positions include Thr92, Asp113, and Asn141–Ala142.

It belongs to the class I-like SAM-binding methyltransferase superfamily. MenG/UbiE family.

It carries out the reaction a 2-demethylmenaquinol + S-adenosyl-L-methionine = a menaquinol + S-adenosyl-L-homocysteine + H(+). The catalysed reaction is a 2-methoxy-6-(all-trans-polyprenyl)benzene-1,4-diol + S-adenosyl-L-methionine = a 5-methoxy-2-methyl-3-(all-trans-polyprenyl)benzene-1,4-diol + S-adenosyl-L-homocysteine + H(+). It participates in quinol/quinone metabolism; menaquinone biosynthesis; menaquinol from 1,4-dihydroxy-2-naphthoate: step 2/2. The protein operates within cofactor biosynthesis; ubiquinone biosynthesis. Methyltransferase required for the conversion of demethylmenaquinol (DMKH2) to menaquinol (MKH2) and the conversion of 2-polyprenyl-6-methoxy-1,4-benzoquinol (DDMQH2) to 2-polyprenyl-3-methyl-6-methoxy-1,4-benzoquinol (DMQH2). The protein is Ubiquinone/menaquinone biosynthesis C-methyltransferase UbiE of Brucella suis (strain ATCC 23445 / NCTC 10510).